The following is a 586-amino-acid chain: Arginine--tRNA ligase (586 aa).

A 'HIGH' region motif is present at residues alanine 133 to serine 143.

The protein belongs to the class-I aminoacyl-tRNA synthetase family. In terms of assembly, monomer.

The protein resides in the cytoplasm. It carries out the reaction tRNA(Arg) + L-arginine + ATP = L-arginyl-tRNA(Arg) + AMP + diphosphate. This chain is Arginine--tRNA ligase, found in Leptospira interrogans serogroup Icterohaemorrhagiae serovar copenhageni (strain Fiocruz L1-130).